We begin with the raw amino-acid sequence, 677 residues long: UvrABC system protein B (677 aa).

In terms of domain architecture, Helicase ATP-binding spans 27-414 (ANLGHGVRDQ…SQGVIAEQII (388 aa)). 40 to 47 (GVTGSGKT) provides a ligand contact to ATP. The Beta-hairpin motif lies at 93-116 (YYDYYQPEAYVPASDTYIEKDSSI). The Helicase C-terminal domain maps to 432–594 (QVDDLLAECR…IEPRTIRKSL (163 aa)). The region spanning 638–673 (AKHIQKLEREMREAAKELEFERAATLRDRIRLLRER) is the UVR domain.

The protein belongs to the UvrB family. As to quaternary structure, forms a heterotetramer with UvrA during the search for lesions. Interacts with UvrC in an incision complex.

The protein resides in the cytoplasm. Its function is as follows. The UvrABC repair system catalyzes the recognition and processing of DNA lesions. A damage recognition complex composed of 2 UvrA and 2 UvrB subunits scans DNA for abnormalities. Upon binding of the UvrA(2)B(2) complex to a putative damaged site, the DNA wraps around one UvrB monomer. DNA wrap is dependent on ATP binding by UvrB and probably causes local melting of the DNA helix, facilitating insertion of UvrB beta-hairpin between the DNA strands. Then UvrB probes one DNA strand for the presence of a lesion. If a lesion is found the UvrA subunits dissociate and the UvrB-DNA preincision complex is formed. This complex is subsequently bound by UvrC and the second UvrB is released. If no lesion is found, the DNA wraps around the other UvrB subunit that will check the other stand for damage. The chain is UvrABC system protein B from Nitratidesulfovibrio vulgaris (strain ATCC 29579 / DSM 644 / CCUG 34227 / NCIMB 8303 / VKM B-1760 / Hildenborough) (Desulfovibrio vulgaris).